The sequence spans 397 residues: Acetate kinase (397 aa).

N7 contacts Mg(2+). Residue K14 coordinates ATP. R91 lines the substrate pocket. Catalysis depends on D148, which acts as the Proton donor/acceptor. ATP-binding positions include 208–212 (HLGNG), 283–285 (DFR), and 331–335 (GLGEN). E383 is a binding site for Mg(2+).

It belongs to the acetokinase family. In terms of assembly, homodimer. Mg(2+) is required as a cofactor. Requires Mn(2+) as cofactor.

The protein resides in the cytoplasm. The catalysed reaction is acetate + ATP = acetyl phosphate + ADP. It functions in the pathway metabolic intermediate biosynthesis; acetyl-CoA biosynthesis; acetyl-CoA from acetate: step 1/2. Its function is as follows. Catalyzes the formation of acetyl phosphate from acetate and ATP. Can also catalyze the reverse reaction. The sequence is that of Acetate kinase from Heliobacterium modesticaldum (strain ATCC 51547 / Ice1).